Here is a 190-residue protein sequence, read N- to C-terminus: Crossover junction endodeoxyribonuclease RuvC (190 aa).

Residues Asp8, Glu67, and Asp139 contribute to the active site. Asp8, Glu67, and Asp139 together coordinate Mg(2+).

Belongs to the RuvC family. In terms of assembly, homodimer which binds Holliday junction (HJ) DNA. The HJ becomes 2-fold symmetrical on binding to RuvC with unstacked arms; it has a different conformation from HJ DNA in complex with RuvA. In the full resolvosome a probable DNA-RuvA(4)-RuvB(12)-RuvC(2) complex forms which resolves the HJ. It depends on Mg(2+) as a cofactor.

It localises to the cytoplasm. It catalyses the reaction Endonucleolytic cleavage at a junction such as a reciprocal single-stranded crossover between two homologous DNA duplexes (Holliday junction).. Functionally, the RuvA-RuvB-RuvC complex processes Holliday junction (HJ) DNA during genetic recombination and DNA repair. Endonuclease that resolves HJ intermediates. Cleaves cruciform DNA by making single-stranded nicks across the HJ at symmetrical positions within the homologous arms, yielding a 5'-phosphate and a 3'-hydroxyl group; requires a central core of homology in the junction. The consensus cleavage sequence is 5'-(A/T)TT(C/G)-3'. Cleavage occurs on the 3'-side of the TT dinucleotide at the point of strand exchange. HJ branch migration catalyzed by RuvA-RuvB allows RuvC to scan DNA until it finds its consensus sequence, where it cleaves and resolves the cruciform DNA. The protein is Crossover junction endodeoxyribonuclease RuvC of Haemophilus influenzae (strain 86-028NP).